The sequence spans 365 residues: Methylthioribose-1-phosphate isomerase (365 aa).

The active-site Proton donor is the D255.

Belongs to the eIF-2B alpha/beta/delta subunits family. MtnA subfamily.

The protein localises to the cytoplasm. It is found in the nucleus. The enzyme catalyses 5-(methylsulfanyl)-alpha-D-ribose 1-phosphate = 5-(methylsulfanyl)-D-ribulose 1-phosphate. It participates in amino-acid biosynthesis; L-methionine biosynthesis via salvage pathway; L-methionine from S-methyl-5-thio-alpha-D-ribose 1-phosphate: step 1/6. Its function is as follows. Catalyzes the interconversion of methylthioribose-1-phosphate (MTR-1-P) into methylthioribulose-1-phosphate (MTRu-1-P). This chain is Methylthioribose-1-phosphate isomerase, found in Drosophila willistoni (Fruit fly).